The primary structure comprises 410 residues: Dephospho-CoA kinase (410 aa).

In terms of domain architecture, DPCK spans 3–201 (CIGITGGIGA…HRILPFAYNL (199 aa)). 11 to 16 (GAGKSL) serves as a coordination point for ATP. The segment at 196 to 410 (PFAYNLSQRQ…EWADSTGWRL (215 aa)) is UPF0157.

In the N-terminal section; belongs to the CoaE family. This sequence in the C-terminal section; belongs to the UPF0157 (GrpB) family.

It is found in the cytoplasm. The enzyme catalyses 3'-dephospho-CoA + ATP = ADP + CoA + H(+). It participates in cofactor biosynthesis; coenzyme A biosynthesis; CoA from (R)-pantothenate: step 5/5. Catalyzes the phosphorylation of the 3'-hydroxyl group of dephosphocoenzyme A to form coenzyme A. In Mycobacterium leprae (strain TN), this protein is Dephospho-CoA kinase.